A 471-amino-acid chain; its full sequence is Putative multidrug resistance protein MdtD (471 aa).

13 helical membrane passes run 12-32 (LWIV…VNTA), 49-69 (MIIV…GWLA), 77-97 (IFFT…QAST), 106-126 (VLQG…VMKI), 138-158 (FVTL…GVLV), 165-185 (WIFL…LCLM), 195-215 (FDLS…LALD), 220-240 (LGIS…ALLL), 263-283 (FSLG…LPFM), 286-306 (VFLQ…MIPM), 342-362 (LLFM…VLFL), 393-413 (LLSM…GLLL), and 431-451 (VFLY…LIFS).

Belongs to the major facilitator superfamily. TCR/Tet family.

Its subcellular location is the cell inner membrane. The polypeptide is Putative multidrug resistance protein MdtD (Klebsiella pneumoniae (strain 342)).